The primary structure comprises 328 residues: D-cysteine desulfhydrase (328 aa).

K51 is subject to N6-(pyridoxal phosphate)lysine.

This sequence belongs to the ACC deaminase/D-cysteine desulfhydrase family. In terms of assembly, homodimer. Pyridoxal 5'-phosphate serves as cofactor.

It carries out the reaction D-cysteine + H2O = hydrogen sulfide + pyruvate + NH4(+) + H(+). Functionally, catalyzes the alpha,beta-elimination reaction of D-cysteine and of several D-cysteine derivatives. It could be a defense mechanism against D-cysteine. This Salmonella choleraesuis (strain SC-B67) protein is D-cysteine desulfhydrase.